The chain runs to 457 residues: Flavohemoprotein-2 (457 aa).

In terms of domain architecture, Globin spans 2 to 157 (ALSEDTIKAV…LADLLIKREE (156 aa)). Histidine 106 provides a ligand contact to heme b. Residues tyrosine 116 and glutamate 156 each act as charge relay system in the active site. Residues 168 to 456 (GGWRQTRTFR…FEMFGPFKAS (289 aa)) are reductase. The FAD-binding FR-type domain occupies 171-278 (RQTRTFRVEE…APPYGDFFLR (108 aa)). FAD-binding positions include tyrosine 210 and 227–230 (RQYS). 320–325 (GIGQTP) lines the NADP(+) pocket. 449 to 452 (MFGP) provides a ligand contact to FAD.

The protein belongs to the globin family. Two-domain flavohemoproteins subfamily. This sequence in the C-terminal section; belongs to the flavoprotein pyridine nucleotide cytochrome reductase family. Monomer. It depends on heme b as a cofactor. The cofactor is FAD.

The enzyme catalyses 2 nitric oxide + NADPH + 2 O2 = 2 nitrate + NADP(+) + H(+). The catalysed reaction is 2 nitric oxide + NADH + 2 O2 = 2 nitrate + NAD(+) + H(+). Flavohemoprotein involved in nitric oxide (NO) detoxification in an aerobic process, termed nitric oxide dioxygenase (NOD) reaction that utilizes O(2) and NAD(P)H to convert NO to nitrate, which protects the protozoan parasite from various noxious nitrogen compounds. Therefore, plays a central role in the inducible response to nitrosative stress. May also be involved in O(2) detoxification. The sequence is that of Flavohemoprotein-2 (hmpA-2) from Giardia intestinalis (strain P15) (Giardia lamblia).